Here is a 178-residue protein sequence, read N- to C-terminus: Beta-lactoglobulin-1A/1C (178 aa).

The N-terminal stretch at 1 to 18 (MRCLLLTLGLALLCGVQA) is a signal peptide. Cystine bridges form between C84–C176 and C124–C137.

It belongs to the calycin superfamily. Lipocalin family. In terms of assembly, under physiological conditions beta-lactoglobulin exists as an equilibrium mixture of monomeric and dimeric forms.

Its subcellular location is the secreted. Functionally, lactoglobulin is the primary component of whey, it binds retinol and is probably involved in the transport of that molecule. The chain is Beta-lactoglobulin-1A/1C from Sus scrofa (Pig).